The sequence spans 160 residues: Protein P5 (160 aa).

The chain crosses the membrane as a helical span at residues 7–23 (FLATAAALGVAMFPTQI).

The protein resides in the virion membrane. This Pseudoalteromonas espejiana (Bacteriophage PM2) protein is Protein P5 (V).